Reading from the N-terminus, the 1381-residue chain is Hepatocyte growth factor receptor (1381 aa).

The signal sequence occupies residues 1–24 (MKALAVLGPGLLVHLLTLVQKSGG). Residues 25–932 (ECKEALVKSA…VIVQPDQNFT (908 aa)) lie on the Extracellular side of the membrane. In terms of domain architecture, Sema spans 27–515 (KEALVKSAMN…TGKTITKIPL (489 aa)). N-linked (GlcNAc...) asparagine glycosylation is found at Asn45 and Asn74. 6 disulfides stabilise this stretch: Cys95–Cys101, Cys98–Cys159, Cys133–Cys141, Cys172–Cys175, Cys298–Cys363, and Cys385–Cys397. Residue Asn106 is glycosylated (N-linked (GlcNAc...) asparagine). Asn358 carries N-linked (GlcNAc...) asparagine glycosylation. Residue Asn399 is glycosylated (N-linked (GlcNAc...) asparagine). Disulfide bonds link Cys520/Cys538, Cys526/Cys561, Cys529/Cys545, and Cys541/Cys551. IPT/TIG domains follow at residues 563 to 655 (PTIY…FSYV), 657 to 739 (PIIT…FNYR), and 742 to 836 (PIVD…LIYV). A glycan (O-linked (Man) threonine) is linked at Thr582. N-linked (GlcNAc...) asparagine glycosylation is found at Asn607 and Asn635. 2 O-linked (Man) threonine glycosylation sites follow: Thr676 and Thr761. N-linked (GlcNAc...) asparagine glycans are attached at residues Asn785, Asn879, and Asn930. Residues 933 to 955 (GLIVGVISISVLLSLLFGLFLWL) form a helical membrane-spanning segment. Over 956-1381 (KRRKQIKDLG…QDHVDGEGDT (426 aa)) the chain is Cytoplasmic. Position 966 is a phosphoserine (Ser966). The residue at position 977 (Thr977) is a Phosphothreonine. Residues Ser990, Ser997, and Ser1000 each carry the phosphoserine modification. A Phosphotyrosine modification is found at Tyr1003. The 268-residue stretch at 1078 to 1345 (VHFNEVIGRG…RISAIFSAFI (268 aa)) folds into the Protein kinase domain. Residues 1084–1092 (IGRGHFGCV) and Lys1110 contribute to the ATP site. Catalysis depends on Asp1204, which acts as the Proton acceptor. The interval 1212-1381 (LDENFTVKVA…QDHVDGEGDT (170 aa)) is interaction with RANBP9. A Phosphotyrosine modification is found at Tyr1230. Residues Tyr1234 and Tyr1235 each carry the phosphotyrosine; by autocatalysis modification. The residue at position 1289 (Thr1289) is a Phosphothreonine. Positions 1320-1359 (WHPKAEQRPSFAELVSRISAIFSAFIGEHYVHVNATYVNV) are interaction with MUC20. Residues Tyr1349 and Tyr1356 each carry the phosphotyrosine; by autocatalysis modification. Tyr1365 bears the Phosphotyrosine mark.

The protein belongs to the protein kinase superfamily. Tyr protein kinase family. In terms of assembly, heterodimer made of an alpha chain (50 kDa) and a beta chain (145 kDa) which are disulfide linked. Binds PLXNB1. Interacts when phosphorylated with downstream effectors including STAT3, PIK3R1, SRC, PCLG1, GRB2 and GAB1. Interacts with SPSB1, SPSB2 and SPSB4. Interacts with INPP5D/SHIP1. When phosphorylated at Tyr-1356, interacts with INPPL1/SHIP2. Interacts with RANBP9 and RANBP10, as well as SPSB1, SPSB2, SPSB3 and SPSB4. SPSB1 binding occurs in the presence and in the absence of HGF, however HGF treatment has a positive effect on this interaction. Interacts with MUC20; prevents interaction with GRB2 and suppresses hepatocyte growth factor-induced cell proliferation. Interacts with GRB10. Interacts with PTPN1 and PTPN2. Interacts with HSP90AA1 and HSP90AB1; the interaction suppresses MET kinase activity. Interacts with tensin TNS3. Interacts (when phosphorylated) with tensin TNS4 (via SH2 domain); the interaction increases MET protein stability by inhibiting MET endocytosis and subsequent lysosomal degradation. Autophosphorylated in response to ligand binding on Tyr-1234 and Tyr-1235 in the kinase domain leading to further phosphorylation of Tyr-1349 and Tyr-1356 in the C-terminal multifunctional docking site. Dephosphorylated by PTPRJ at Tyr-1349 and Tyr-1365. Dephosphorylated by PTPN1 and PTPN2. Post-translationally, ubiquitinated. Ubiquitination by CBL regulates the receptor stability and activity through proteasomal degradation. In terms of processing, O-mannosylation of IPT/TIG domains by TMEM260 is required for protein maturation. O-mannosylated residues are composed of single mannose glycans that are not elongated or modified.

The protein resides in the membrane. The catalysed reaction is L-tyrosyl-[protein] + ATP = O-phospho-L-tyrosyl-[protein] + ADP + H(+). Its activity is regulated as follows. In its inactive state, the C-terminal tail interacts with the catalytic domain and inhibits the kinase activity. Upon ligand binding, the C-terminal tail is displaced and becomes phosphorylated, thus increasing the kinase activity. Functionally, receptor tyrosine kinase that transduces signals from the extracellular matrix into the cytoplasm by binding to hepatocyte growth factor/HGF ligand. Regulates many physiological processes including proliferation, scattering, morphogenesis and survival. Ligand binding at the cell surface induces autophosphorylation of MET on its intracellular domain that provides docking sites for downstream signaling molecules. Following activation by ligand, interacts with the PI3-kinase subunit PIK3R1, PLCG1, SRC, GRB2, STAT3 or the adapter GAB1. Recruitment of these downstream effectors by MET leads to the activation of several signaling cascades including the RAS-ERK, PI3 kinase-AKT, or PLCgamma-PKC. The RAS-ERK activation is associated with the morphogenetic effects while PI3K/AKT coordinates prosurvival effects. During embryonic development, MET signaling plays a role in gastrulation, development and migration of muscles and neuronal precursors, angiogenesis and kidney formation. In adults, participates in wound healing as well as organ regeneration and tissue remodeling. Also promotes differentiation and proliferation of hematopoietic cells. The sequence is that of Hepatocyte growth factor receptor (MET) from Rhinolophus ferrumequinum (Greater horseshoe bat).